Here is a 527-residue protein sequence, read N- to C-terminus: Fusicoccadiene C-8 hydroxylase (527 aa).

A helical membrane pass occupies residues 15–35 (GKPLLLFLILITLTYSLGIVF). N-linked (GlcNAc...) asparagine glycosylation is present at Asn-125. Cys-465 provides a ligand contact to heme. An N-linked (GlcNAc...) asparagine glycan is attached at Asn-496.

This sequence belongs to the cytochrome P450 family. Heme serves as cofactor.

It localises to the membrane. Its pathway is mycotoxin biosynthesis. Its function is as follows. Cytochrome P450 monooxygenase; part of the gene cluster that mediates the biosynthesis of the diterpene glucoside brassicicene C. In the first step of the brassicicene C biosynthesis, the bifunctional diterpene synthase bsc8 that possesses both prenyl transferase and terpene cyclase activity, converts isopentenyl diphosphate and dimethylallyl diphosphate into geranylgeranyl diphosphate (GGDP) that is further converted into fusicocca-2,10(14)-diene, the first precursor for brassicicene C. Fusicocca-2,10(14)-diene is then substrate of cytochrome P450 monooxygenase bsc1 for hydroxylation at the C-8 position. Oxidation at C-16 position to aldehyde is then catalyzed by the cytochrome P450 monooyxygenase bsc7, yielding fusicocca-2,10(14)-diene-8-beta,16-diol. Follows the isomerization of the double bond and reduction of aldehyde to alcohol catalyzed by the short-chain dehydrogenase/reductase bsc3 to yield the diol compound fusicocca-1,10(14)-diene-8 beta,16-diol. The next step is the oxidation at the C-3 position of fusicocca-2,10(14)-diene-8-beta,16-diol catalyzed by the alpha-ketoglutarate dependent dioxygenase bsc9, to produce a triol compound. Methylation of the hydroxy group at position 16 is performed by the methyltransferase bsc6. 16-O-methylation is followed by oxidation at the C-13 position to ketone and an alkyl shift of the methyl group leads to brassicicene C. Although the probable acetyltransferase bsc4 is included in the gene cluster, no acetylation reactions are necessary for brassicicene C biosynthesis. However, the fact that brassicicene E, which is a structurally related compound having an acetoxy group at position 12, was previously isolated from another strain of A.brassicicola suggests that the ATCC 96836 strain might also produce a small amount of brassicicene E. The sequence is that of Fusicoccadiene C-8 hydroxylase from Alternaria brassicicola (Dark leaf spot agent).